We begin with the raw amino-acid sequence, 88 residues long: Small ribosomal subunit protein eS21 (88 aa).

The protein belongs to the eukaryotic ribosomal protein eS21 family. In terms of assembly, component of the small ribosomal subunit. Mature ribosomes consist of a small (40S) and a large (60S) subunit. The 40S subunit contains about 33 different proteins and 1 molecule of RNA (18S). The 60S subunit contains about 49 different proteins and 3 molecules of RNA (25S, 5.8S and 5S).

The protein localises to the cytoplasm. Functionally, required for the processing of the 20S rRNA-precursor to mature 18S rRNA in a late step of the maturation of 40S ribosomal subunits. Has a physiological role leading to 18S rRNA stability. The sequence is that of Small ribosomal subunit protein eS21 (rps21) from Aspergillus fumigatus (strain ATCC MYA-4609 / CBS 101355 / FGSC A1100 / Af293) (Neosartorya fumigata).